Consider the following 151-residue polypeptide: Deoxyuridine 5'-triphosphate nucleotidohydrolase (151 aa).

Residues 70–72 (RSG), N83, and 87–89 (LID) contribute to the substrate site.

Belongs to the dUTPase family. The cofactor is Mg(2+).

The catalysed reaction is dUTP + H2O = dUMP + diphosphate + H(+). It participates in pyrimidine metabolism; dUMP biosynthesis; dUMP from dCTP (dUTP route): step 2/2. Its function is as follows. This enzyme is involved in nucleotide metabolism: it produces dUMP, the immediate precursor of thymidine nucleotides and it decreases the intracellular concentration of dUTP so that uracil cannot be incorporated into DNA. The protein is Deoxyuridine 5'-triphosphate nucleotidohydrolase of Methylococcus capsulatus (strain ATCC 33009 / NCIMB 11132 / Bath).